The following is a 120-amino-acid chain: NAD(P)H-quinone oxidoreductase subunit 3 (120 aa).

The next 3 helical transmembrane spans lie at 6–26 (GYDA…LALV), 64–84 (MFAL…PWAV), and 89–109 (LGLL…VALA).

Belongs to the complex I subunit 3 family. NDH-1 can be composed of about 15 different subunits; different subcomplexes with different compositions have been identified which probably have different functions.

Its subcellular location is the cellular thylakoid membrane. It carries out the reaction a plastoquinone + NADH + (n+1) H(+)(in) = a plastoquinol + NAD(+) + n H(+)(out). The catalysed reaction is a plastoquinone + NADPH + (n+1) H(+)(in) = a plastoquinol + NADP(+) + n H(+)(out). Its function is as follows. NDH-1 shuttles electrons from an unknown electron donor, via FMN and iron-sulfur (Fe-S) centers, to quinones in the respiratory and/or the photosynthetic chain. The immediate electron acceptor for the enzyme in this species is believed to be plastoquinone. Couples the redox reaction to proton translocation, and thus conserves the redox energy in a proton gradient. Cyanobacterial NDH-1 also plays a role in inorganic carbon-concentration. The sequence is that of NAD(P)H-quinone oxidoreductase subunit 3 from Synechococcus sp. (strain CC9605).